The primary structure comprises 490 residues: Sushi domain-containing protein 4 (490 aa).

The segment at M1 to Q21 is disordered. A signal peptide spans M1–C41. At F42–T319 the chain is on the extracellular side. 4 consecutive Sushi domains span residues Q55–Q119, E120–G179, Q178–A239, and E241–K304. Intrachain disulfides connect C57-C99, C85-C117, C122-C165, C147-C177, C180-C224, C210-C237, C243-C289, and C274-C302. N104 and N134 each carry an N-linked (GlcNAc...) asparagine glycan. N-linked (GlcNAc...) asparagine glycosylation is present at N192. The chain crosses the membrane as a helical span at residues W320–A340. Residues R341–P490 are Cytoplasmic-facing. Positions G401–P490 are disordered. The segment covering C430–A456 has biased composition (polar residues). The segment covering I479–P490 has biased composition (acidic residues).

In terms of tissue distribution, isoform 3 is the predominant isoform in all tissues except cortex, cerebellum, kidney, and breast. Isoform 1 is found primarily in the esophagus and the brain.

It localises to the membrane. The protein localises to the secreted. Its function is as follows. Acts as a complement inhibitor by disrupting the formation of the classical C3 convertase. Isoform 3 inhibits the classical complement pathway, while membrane-bound isoform 1 inhibits deposition of C3b via both the classical and alternative complement pathways. This Homo sapiens (Human) protein is Sushi domain-containing protein 4 (SUSD4).